Consider the following 122-residue polypeptide: uncharacterized protein (122 aa).

The protein belongs to the IIV-6 115R family.

This is an uncharacterized protein from Acheta domesticus (House cricket).